A 346-amino-acid polypeptide reads, in one-letter code: FAS-associated factor 2 (346 aa).

Residue K68 is modified to N6-acetyllysine. The stretch at 176–251 (SERLEREERN…EEKERKLECL (76 aa)) forms a coiled coil. The interval 200–262 (ASLRADQEKE…PEPSPDDPDS (63 aa)) is disordered. Residues 204–249 (ADQEKERKKREERERKRRKEEEVQQQKLAEERRRQNLQEEKERKLE) are compositionally biased toward basic and acidic residues. Residues 258-340 (DDPDSVKIIF…GLSHTEVLFV (83 aa)) enclose the UBX domain.

As to quaternary structure, identified in a complex that contains SEL1L, OS9, FAF2/UBXD8, UBE2J1/UBC6E and AUP1. Interacts with YOD1. Interacts (via N-terminus) with UBQLN2 (via C-terminus). Interacts with PNPLA2 and UBAC2. Interacts with ZFAND2B; probably through VCP. Interacts with LMBR1L.

The protein resides in the cytoplasm. It localises to the lipid droplet. Its subcellular location is the endoplasmic reticulum. In terms of biological role, plays an important role in endoplasmic reticulum-associated degradation (ERAD) that mediates ubiquitin-dependent degradation of misfolded endoplasmic reticulum proteins. By controlling the steady-state expression of the IGF1R receptor, indirectly regulates the insulin-like growth factor receptor signaling pathway. Involved in inhibition of lipid droplet degradation by binding to phospholipase PNPL2 and inhibiting its activity by promoting dissociation of PNPL2 from its endogenous activator, ABHD5 which inhibits the rate of triacylglycerol hydrolysis. Involved in stress granule disassembly: associates with ubiquitinated G3BP1 in response to heat shock, thereby promoting interaction between ubiquitinated G3BP1 and VCP, followed by G3BP1 extraction from stress granules and stress granule disassembly. This chain is FAS-associated factor 2 (Faf2), found in Rattus norvegicus (Rat).